The sequence spans 204 residues: Putative AgrB-like protein (204 aa).

A run of 5 helical transmembrane segments spans residues 52–74 (YGIA…YLWL), 87–107 (LNCT…FQNI), 111–131 (NWIV…FAPA), 151–168 (AMIG…IPFA), and 173–190 (LIMV…PLTY).

The protein belongs to the AgrB family.

Its subcellular location is the cell membrane. Its function is as follows. May be involved in the proteolytic processing of a quorum sensing system signal molecule precursor. This chain is Putative AgrB-like protein, found in Listeria monocytogenes serovar 1/2a (strain ATCC BAA-679 / EGD-e).